Consider the following 146-residue polypeptide: Hemoglobin subunit beta (146 aa).

Positions 2-146 (HWSAEEKQLI…VAHALARKYH (145 aa)) constitute a Globin domain. The heme b site is built by H63 and H92.

This sequence belongs to the globin family. As to quaternary structure, heterotetramer of two alpha chains and two beta chains. In terms of tissue distribution, red blood cells.

Functionally, involved in oxygen transport from the lung to the various peripheral tissues. This chain is Hemoglobin subunit beta (HBB), found in Aptenodytes forsteri (Emperor penguin).